The primary structure comprises 307 residues: Acetyl-coenzyme A carboxylase carboxyl transferase subunit beta (307 aa).

Positions Met-1–Arg-21 are disordered. Residues Leu-43–Ala-307 enclose the CoA carboxyltransferase N-terminal domain.

Belongs to the AccD/PCCB family. As to quaternary structure, acetyl-CoA carboxylase is a heterohexamer composed of biotin carboxyl carrier protein (AccB), biotin carboxylase (AccC) and two subunits each of ACCase subunit alpha (AccA) and ACCase subunit beta (AccD).

The protein localises to the cytoplasm. The catalysed reaction is N(6)-carboxybiotinyl-L-lysyl-[protein] + acetyl-CoA = N(6)-biotinyl-L-lysyl-[protein] + malonyl-CoA. The protein operates within lipid metabolism; malonyl-CoA biosynthesis; malonyl-CoA from acetyl-CoA: step 1/1. Functionally, component of the acetyl coenzyme A carboxylase (ACC) complex. Biotin carboxylase (BC) catalyzes the carboxylation of biotin on its carrier protein (BCCP) and then the CO(2) group is transferred by the transcarboxylase to acetyl-CoA to form malonyl-CoA. The protein is Acetyl-coenzyme A carboxylase carboxyl transferase subunit beta of Phenylobacterium zucineum (strain HLK1).